The sequence spans 325 residues: Structure-specific endonuclease subunit SLX1 (325 aa).

Positions 10 to 92 constitute a GIY-YIG domain; sequence ALYTVYILRS…NNPHLSMHIP (83 aa). The SLX1-type zinc-finger motif lies at 230–284; it reads CVVCREEMKSGEGLHAVCTHEGCDGVGHISCWSRSFLKNNDTGSILPVQGQCPMC.

This sequence belongs to the SLX1 family. Forms a heterodimer with SLX4. A divalent metal cation is required as a cofactor.

It is found in the nucleus. Functionally, catalytic subunit of the SLX1-SLX4 structure-specific endonuclease that resolves DNA secondary structures generated during DNA repair and recombination. Has endonuclease activity towards branched DNA substrates, introducing single-strand cuts in duplex DNA close to junctions with ss-DNA. The protein is Structure-specific endonuclease subunit SLX1 of Chaetomium globosum (strain ATCC 6205 / CBS 148.51 / DSM 1962 / NBRC 6347 / NRRL 1970) (Soil fungus).